The primary structure comprises 554 residues: Membrane protein insertase YidC (554 aa).

Transmembrane regions (helical) follow at residues 7–24, 362–382, 436–456, 475–495, and 510–530; these read VLWV…DNWQ, VVGN…AVFF, LPVV…LASV, PFFI…SLNP, and PIAF…YYVV.

The protein belongs to the OXA1/ALB3/YidC family. Type 1 subfamily. In terms of assembly, interacts with the Sec translocase complex via SecD. Specifically interacts with transmembrane segments of nascent integral membrane proteins during membrane integration.

It localises to the cell inner membrane. In terms of biological role, required for the insertion and/or proper folding and/or complex formation of integral membrane proteins into the membrane. Involved in integration of membrane proteins that insert both dependently and independently of the Sec translocase complex, as well as at least some lipoproteins. Aids folding of multispanning membrane proteins. The polypeptide is Membrane protein insertase YidC (Burkholderia vietnamiensis (strain G4 / LMG 22486) (Burkholderia cepacia (strain R1808))).